The following is a 259-amino-acid chain: Haloacid dehalogenase-like hydrolase domain-containing protein 2 (259 aa).

Asp13 and Ser15 together coordinate Mg(2+). Residues 13-15 (DLS) and 46-47 (TN) contribute to the substrate site. Positions 47-71 (NTTKESKQDLLERLRKLEFDISEDE) form a coiled coil. An N6-succinyllysine modification is found at Lys50. Substrate is bound at residue Lys179. Mg(2+) is bound at residue Asp204.

It belongs to the HAD-like hydrolase superfamily. Mg(2+) serves as cofactor.

The polypeptide is Haloacid dehalogenase-like hydrolase domain-containing protein 2 (HDHD2) (Pongo abelii (Sumatran orangutan)).